We begin with the raw amino-acid sequence, 57 residues long: Preprotein translocase subunit SecG (57 aa).

Topologically, residues 1-31 (MAKKKGEGPGLMSSAGLMRYFESEETSIKLD) are cytoplasmic. The helical transmembrane segment at 32-53 (PKMVIGAGIASGVAIMALNITF) threads the bilayer. Residues 54–57 (GLWP) are Extracellular-facing.

The protein belongs to the SEC61-beta family. As to quaternary structure, component of the protein translocase complex. Heterotrimer consisting of alpha (SecY), beta (SecG) and gamma (SecE) subunits. Can form oligomers of the heterotrimer.

It is found in the cell membrane. Its function is as follows. Involved in protein export. The function of the beta subunit is unknown, but it may be involved in stabilization of the trimeric complex. The protein is Preprotein translocase subunit SecG of Methanothrix thermoacetophila (strain DSM 6194 / JCM 14653 / NBRC 101360 / PT) (Methanosaeta thermophila).